Here is a 1269-residue protein sequence, read N- to C-terminus: MIAYKQKKTKKKRVLSTGQLSTDVTTSEMGLKSINSNAILDPDYIKELVNDIRKFSHMLLYLKEAILSECFKEVIHIRLDELLRVLKSVMNKHQNLNSVDLQNAAEMLIAKVKAVNFTEVNEENKNDLFREVFSSIETLAFTFGNILTNFLMGDVGNDSLLRLPVSQESKSFESVSVESVDSSNEKGSFSPIELDSMLLKNTNSVELALSYAKTWSKYTKNIVSWVEKKLNLELESTRNIVKLAEATRTNIGLQEFMPLQSLFTNALLNDIESSHLLQQTIAALQANKFVQPLLGRKNEMEKQRKEIKELWKQEQNKMLETETALKKAKLLCMQRQDEYEKAKSSMFRAEEEHLSSSSGLVKNLNRQLEKKRRLEEEALQKVEEANELYKVCVTNVEERRNDLENTKREILTQLRKLVFQCDLTLKAVTVNLFQMQQLQAASLSSNLQSLCDSAKLYDPGQEYSEFVRATNSAEEEKVDGNVNKQLSSPPISGYGPSDSLEDVVRLPDSSNKMEEDRCSNSADITGPSFLRSWTFGMFSDSESTGGSSESRSLDSESISPGDFHRKLPRTPSSGTMSSADDLDEREPPSPSEAGPNSLGTFKKTLMSKAALTHKFRKLRSPTKCRDCEGIVVFHGVECEECLLVCHRKCLENLVIICGHQKLMGKIHLFGAEFTQVAKKEPDGIPFVLKMCASEIENRALSLQGIYRVCGNKIKTEKLCQALENGMHLVDISEFSSHDICDVLKLYLRQLPEPFILFRLYKEFIDLAVEIQHVNEEQEMKKDNPEDKKWPSSSIEISRILLKSKDLLRQLPASNFNSLHYLIVHLKRVVDHSEENKMNSRNLGVIFGPSLLRPRPTTAPITISSLADYSNQARLVEFLITYSQKIFDGSLQPQDSAVGSAGGIAPQVDPGYLPKSLLSPEERDPERSMKSLFFSSKEDIQTTDSECKSFESTPSFEESERKQNALEKCDAYLIDNKGRLLVDQELESASRKTEDACKTSKLPTLKSDREINGVERHLPRTRIRPVSLPIDRLLLLASSPTERNGRNMGNVNSDKLCKNPVFEGVNRKDSPTVVCSKFDGFDQQTLQKTREKQYEQNDHTAKTGMIVPSAFQERGVALNIRSSGDHPVSITQPSKPYTEPVRSTRQVSERRSSDSCPPASVRTPRTLQPQHWTTFYKPPAPAASGRGDEEKPVTPSVAVPPGTTHAPQEHVLKSVPGSENASAGPVHPVSRPEEKAEERDQPDVPTACQRPRLKRMQQFEDLEDEIPQFV.

Serine 171, serine 176, serine 179, and serine 190 each carry phosphoserine. An F-BAR domain is found at 192 to 462; that stretch reads IELDSMLLKN…SAKLYDPGQE (271 aa). A coiled-coil region spans residues 296-418; that stretch reads RKNEMEKQRK…EILTQLRKLV (123 aa). Disordered stretches follow at residues 472-523 and 540-599; these read SAEE…NSAD and DSES…NSLG. Residues serine 499, serine 519, and serine 552 each carry the phosphoserine modification. Over residues 540-559 the composition is skewed to low complexity; the sequence is DSESTGGSSESRSLDSESIS. The Phorbol-ester/DAG-type zinc finger occupies 612-657; that stretch reads THKFRKLRSPTKCRDCEGIVVFHGVECEECLLVCHRKCLENLVIIC. The Rho-GAP domain occupies 671-886; sequence AEFTQVAKKE…FLITYSQKIF (216 aa). The disordered stretch occupies residues 909-936; the sequence is PGYLPKSLLSPEERDPERSMKSLFFSSK. Phosphoserine is present on serine 918. A compositionally biased stretch (basic and acidic residues) spans 919-928; the sequence is PEERDPERSM. Residues serine 954 and serine 1026 each carry the phosphoserine modification. A disordered region spans residues 1120–1269; sequence RSSGDHPVSI…DLEDEIPQFV (150 aa). The segment covering 1128-1145 has biased composition (polar residues); the sequence is SITQPSKPYTEPVRSTRQ. Phosphoserine is present on residues serine 1152 and serine 1154. The segment covering 1162–1172 has biased composition (polar residues); sequence TPRTLQPQHWT. Residues 1229 to 1241 are compositionally biased toward basic and acidic residues; the sequence is SRPEEKAEERDQP. Residues 1259-1269 show a composition bias toward acidic residues; the sequence is EDLEDEIPQFV. The interval 1266 to 1269 is interaction with PTPN13/PTPL1; it reads PQFV.

As to quaternary structure, interacts with PTPN13/PTPL1. Interacts with RAP2A via its coiled coil domain. Interacts with RASIP1.

Functionally, GTPase activator for the Rho-type GTPases by converting them to an inactive GDP-bound state. Has strong activity toward RHOA, and weaker activity toward RAC1 and CDC42. May act as a specific effector of RAP2A to regulate Rho. In concert with RASIP1, suppresses RhoA signaling and dampens ROCK and MYH9 activities in endothelial cells and plays an essential role in blood vessel tubulogenesis. The protein is Rho GTPase-activating protein 29 (ARHGAP29) of Bos taurus (Bovine).